The chain runs to 491 residues: UDP-N-acetylmuramate--L-alanine ligase (491 aa).

126 to 132 contacts ATP; the sequence is GTHGKTT.

Belongs to the MurCDEF family.

It localises to the cytoplasm. It carries out the reaction UDP-N-acetyl-alpha-D-muramate + L-alanine + ATP = UDP-N-acetyl-alpha-D-muramoyl-L-alanine + ADP + phosphate + H(+). It functions in the pathway cell wall biogenesis; peptidoglycan biosynthesis. Its function is as follows. Cell wall formation. In Shigella boydii serotype 18 (strain CDC 3083-94 / BS512), this protein is UDP-N-acetylmuramate--L-alanine ligase.